The chain runs to 512 residues: Matrix metalloproteinase-27 (512 aa).

The signal sequence occupies residues 1-17 (MKSFLLLFLLFVTFSSA). A propeptide spans 18-98 (LPADQKMENE…PRCGVPDVGQ (81 aa)) (activation peptide). Positions 89 to 96 (PRCGVPDV) match the Cysteine switch motif. Cys91 is a Zn(2+) binding site. The N-linked (GlcNAc...) asparagine glycan is linked to Asn110. Residues Asp121 and Asp155 each coordinate Ca(2+). His165 lines the Zn(2+) pocket. Asp173, Gly174, and Val178 together coordinate Ca(2+). Residue His181 participates in Zn(2+) binding. Ca(2+)-binding residues include Gly188 and Asp192. Residue His194 coordinates Zn(2+). Ca(2+) contacts are provided by Asp196 and Glu199. His216 is a Zn(2+) binding site. Glu217 is an active-site residue. Zn(2+) is bound by residues His220 and His226. 4 Hemopexin repeats span residues 276-325 (PHAC…WPSL), 326-371 (PADL…GFPR), 373-421 (VKKI…FPGI), and 422-465 (GLRV…WFQC). A disulfide bridge links Cys279 with Cys465. Asp286 lines the Ca(2+) pocket. Asp377 and Asp426 together coordinate Ca(2+). A required for retention in the endoplasmic reticulum region spans residues 466–512 (KEPLNSSLDFHFNQEKAYSGEVETLHHQSLSLLIFGIVHLLNKICSY).

The protein belongs to the peptidase M10A family. Ca(2+) serves as cofactor. It depends on Zn(2+) as a cofactor. In terms of processing, N-glycosylated.

The protein resides in the endoplasmic reticulum. In terms of biological role, matrix metalloproteinases degrade protein components of the extracellular matrix such as fibronectin, laminin, gelatins and/or collagens. The chain is Matrix metalloproteinase-27 (MMP27) from Tupaia belangeri (Common tree shrew).